Here is a 185-residue protein sequence, read N- to C-terminus: Ribosome-recycling factor (185 aa).

The protein belongs to the RRF family.

The protein localises to the cytoplasm. In terms of biological role, responsible for the release of ribosomes from messenger RNA at the termination of protein biosynthesis. May increase the efficiency of translation by recycling ribosomes from one round of translation to another. This Streptococcus pneumoniae serotype 2 (strain D39 / NCTC 7466) protein is Ribosome-recycling factor.